We begin with the raw amino-acid sequence, 344 residues long: GTPase Obg (344 aa).

An Obg domain is found at 1–159 (MKFLDLCKVY…RTLWLRLKLI (159 aa)). Residues 126-146 (GNLHFKSSTNQAPRRSNPGQD) are disordered. Residues 130–144 (FKSSTNQAPRRSNPG) show a composition bias toward polar residues. Positions 160–327 (ADVGLLGLPN…VLRKLRGEIS (168 aa)) constitute an OBG-type G domain. GTP is bound by residues 166-173 (GLPNAGKS), 191-195 (FTTLH), 212-215 (DIPG), 279-282 (NKID), and 308-310 (SGV). Mg(2+) contacts are provided by S173 and T193.

This sequence belongs to the TRAFAC class OBG-HflX-like GTPase superfamily. OBG GTPase family. In terms of assembly, monomer. The cofactor is Mg(2+).

The protein localises to the cytoplasm. An essential GTPase which binds GTP, GDP and possibly (p)ppGpp with moderate affinity, with high nucleotide exchange rates and a fairly low GTP hydrolysis rate. Plays a role in control of the cell cycle, stress response, ribosome biogenesis and in those bacteria that undergo differentiation, in morphogenesis control. In Roseobacter denitrificans (strain ATCC 33942 / OCh 114) (Erythrobacter sp. (strain OCh 114)), this protein is GTPase Obg.